The sequence spans 512 residues: Glycerol kinase (512 aa).

Thr14 lines the ADP pocket. Positions 14, 15, and 16 each coordinate ATP. Thr14 is a binding site for sn-glycerol 3-phosphate. Arg18 contacts ADP. Residues Arg83, Glu84, Tyr135, and Asp244 each contribute to the sn-glycerol 3-phosphate site. Arg83, Glu84, Tyr135, Asp244, and Gln245 together coordinate glycerol. ADP is bound by residues Thr266, Gly309, Gly410, and Asn414. ATP-binding residues include Thr266, Gly309, and Gly410.

The protein belongs to the FGGY kinase family.

It catalyses the reaction glycerol + ATP = sn-glycerol 3-phosphate + ADP + H(+). It functions in the pathway polyol metabolism; glycerol degradation via glycerol kinase pathway; sn-glycerol 3-phosphate from glycerol: step 1/1. Its activity is regulated as follows. Inhibited by fructose 1,6-bisphosphate (FBP). Key enzyme in the regulation of glycerol uptake and metabolism. Catalyzes the phosphorylation of glycerol to yield sn-glycerol 3-phosphate. The polypeptide is Glycerol kinase (Gluconobacter oxydans (strain 621H) (Gluconobacter suboxydans)).